Consider the following 325-residue polypeptide: Chain length determinant protein (325 aa).

Over M1–K31 the chain is Cytoplasmic. A helical transmembrane segment spans residues M32–A52. The Periplasmic segment spans residues K53 to K294. Residues A295–G315 form a helical membrane-spanning segment. The Cytoplasmic segment spans residues R316 to K325.

The protein belongs to the WzzB/Cld/Rol family.

It localises to the cell inner membrane. It functions in the pathway bacterial outer membrane biogenesis; lipopolysaccharide biosynthesis. In terms of biological role, confers a modal distribution of chain length on the O-antigen component of lipopolysaccharide (LPS). Gives rise to a reduced number of short chain molecules and increases in numbers of longer molecules. The sequence is that of Chain length determinant protein (wzzB) from Shigella flexneri.